The following is a 496-amino-acid chain: Cytochrome c-552 (496 aa).

An N-terminal signal peptide occupies residues 1-23; that stretch reads MKKYKFLFAISIIAIGLMTVLLA. His-100 lines the heme c pocket. Heme-binding residues include Cys-128, Cys-131, and Lys-132. Positions 166, 169, 170, 210, 213, and 214 each coordinate heme c. Residues Glu-216, Tyr-217, Lys-269, and Gln-271 each coordinate Ca(2+). Tyr-217 is a substrate binding site. His-272 serves as a coordination point for substrate. Residues His-283, Cys-290, Cys-293, His-294, His-308, Cys-321, Cys-324, His-325, and His-400 each coordinate heme c.

This sequence belongs to the cytochrome c-552 family. The cofactor is Ca(2+). Heme c is required as a cofactor.

Its subcellular location is the periplasm. It catalyses the reaction 6 Fe(III)-[cytochrome c] + NH4(+) + 2 H2O = 6 Fe(II)-[cytochrome c] + nitrite + 8 H(+). It participates in nitrogen metabolism; nitrate reduction (assimilation). Functionally, catalyzes the reduction of nitrite to ammonia, consuming six electrons in the process. In Aliarcobacter butzleri (strain RM4018) (Arcobacter butzleri), this protein is Cytochrome c-552.